The sequence spans 726 residues: Serine/threonine-protein kinase PKH3 (726 aa).

Residues 10–271 (FLFREELGHG…LEQIKKHKWF (262 aa)) form the Protein kinase domain. Residues 16–24 (LGHGSYSTV) and K39 contribute to the ATP site. D136 acts as the Proton acceptor in catalysis. A disordered region spans residues 629–679 (QDIPLPSPAKSSSNSGVSEPISKIPPRQLVSASEQSHKAKSEAHTKKANSY). Residues 663–673 (QSHKAKSEAHT) are compositionally biased toward basic and acidic residues.

This sequence belongs to the protein kinase superfamily. Ser/Thr protein kinase family.

The enzyme catalyses L-seryl-[protein] + ATP = O-phospho-L-seryl-[protein] + ADP + H(+). It carries out the reaction L-threonyl-[protein] + ATP = O-phospho-L-threonyl-[protein] + ADP + H(+). Functionally, serine/threonine-protein kinase. This Eremothecium gossypii (strain ATCC 10895 / CBS 109.51 / FGSC 9923 / NRRL Y-1056) (Yeast) protein is Serine/threonine-protein kinase PKH3 (PKH3).